A 242-amino-acid chain; its full sequence is Peroxisomal membrane protein 11-3 (242 aa).

The segment at 1 to 22 (MAAAAAAAGSSDSRKPAAHPPP) is disordered. The Cytoplasmic segment spans residues 1 to 102 (MAAAAAAAGS…LRAHPHPPPA (102 aa)). A helical membrane pass occupies residues 103 to 123 (VALLAYGGEGVYYFLEQFVWL). The Lumenal portion of the chain corresponds to 124 to 214 (AKAGLLPAHL…MALGDVTDGK (91 aa)). Residues 215 to 235 (GLLGSSTLMASAGLLSALISA) form a helical membrane-spanning segment. Over 236–242 (HKNWNSC) the chain is Cytoplasmic.

Belongs to the peroxin-11 family. Expressed in seedlings, roots, leaf sheaths, spikelets and endosperm.

The protein localises to the peroxisome membrane. Its function is as follows. Involved in peroxisomal proliferation. The sequence is that of Peroxisomal membrane protein 11-3 (PEX11-3) from Oryza sativa subsp. japonica (Rice).